Here is an 822-residue protein sequence, read N- to C-terminus: Dimethyl sulfoxide/trimethylamine N-oxide reductase (822 aa).

The tat-type signal signal peptide spans 1–42 (MTKLSGQELHAELSRRAFLSYTAAVGALGLCGTSLLAQGARA). Mo-bis(molybdopterin guanine dinucleotide)-binding positions include Trp158, 158–160 (WKS), Ser189, 232–233 (KT), 262–263 (IN), 283–285 (QTD), 364–365 (WS), Arg368, Asn476, His480, 500–501 (QD), Arg523, Asp553, 683–686 (ASHP), Arg689, 691–693 (HSQ), Asn779, and 796–797 (GQ).

Belongs to the prokaryotic molybdopterin-containing oxidoreductase family. As to quaternary structure, homodimer. Mo-bis(molybdopterin guanine dinucleotide) serves as cofactor. In terms of processing, predicted to be exported by the Tat system. The position of the signal peptide cleavage has been experimentally proven.

The protein resides in the periplasm. The enzyme catalyses dimethyl sulfide + a menaquinone + H2O = dimethyl sulfoxide + a menaquinol. It carries out the reaction trimethylamine + 2 Fe(III)-[cytochrome c] + H2O = trimethylamine N-oxide + 2 Fe(II)-[cytochrome c] + 3 H(+). Catalyzes the reduction of dimethyl sulfoxide (DMSO) and trimethylamine N-oxide (TMAO) to dimethyl sulfide (DMS) and trimethylamine, respectively. The terminal DMSO reductase can also use various sulfoxides and N-oxide compounds as terminal electron acceptor in addition to DMSO and TMAO. In Cereibacter sphaeroides (Rhodobacter sphaeroides), this protein is Dimethyl sulfoxide/trimethylamine N-oxide reductase (dmsA).